Reading from the N-terminus, the 390-residue chain is GPI inositol-deacylase (390 aa).

Residues 21–41 (FIVYFIICLTIIISALGVYLY) form a helical membrane-spanning segment. Residue serine 202 is part of the active site. A helical transmembrane segment spans residues 354-374 (VHLLSLTIFALKWTIIVLAII).

Belongs to the GPI inositol-deacylase family.

The protein localises to the endoplasmic reticulum membrane. Functionally, involved in inositol deacylation of GPI-anchored proteins which plays important roles in the quality control and ER-associated degradation of GPI-anchored proteins. This is GPI inositol-deacylase (BST1) from Candida albicans (strain SC5314 / ATCC MYA-2876) (Yeast).